Consider the following 432-residue polypeptide: Septin-11 (432 aa).

Ala-2 is modified (N-acetylalanine). Ser-9 is modified (phosphoserine). One can recognise a Septin-type G domain in the interval 38 to 304 (QGFCFNILCV…ELYRRCKLEE (267 aa)). The tract at residues 48–55 (GETGIGKS) is G1 motif. Residues 48–55 (GETGIGKS), Gly-103, 184–192 (KADTIAKNE), Gly-238, and Arg-253 each bind GTP. A G3 motif region spans residues 100–103 (DTVG). The tract at residues 183 to 186 (AKAD) is G4 motif. Residues 320–413 (QETYEAKRNE…LLQSQAQQSG (94 aa)) adopt a coiled-coil conformation. The span at 403–416 (QLLQSQAQQSGAQQ) shows a compositional bias: low complexity. Residues 403–432 (QLLQSQAQQSGAQQTKKDKDKKNSPWLCTE) form a disordered region.

The protein belongs to the TRAFAC class TrmE-Era-EngA-EngB-Septin-like GTPase superfamily. Septin GTPase family. In terms of assembly, septins polymerize into heterooligomeric protein complexes that form filaments, and can associate with cellular membranes, actin filaments and microtubules. Forms homooligomers. GTPase activity is required for filament formation. Interacts with SEPTIN7, SEPTIN9 and SEPTIN12.

Its subcellular location is the cytoplasm. The protein localises to the cytoskeleton. It is found in the synapse. The protein resides in the cell projection. It localises to the dendritic spine. Its subcellular location is the axon. Its function is as follows. Filament-forming cytoskeletal GTPase. May play a role in cytokinesis (Potential). May play a role in the cytoarchitecture of neurons, including dendritic arborization and dendritic spines, and in GABAergic synaptic connectivity. The sequence is that of Septin-11 from Macaca fascicularis (Crab-eating macaque).